The primary structure comprises 651 residues: Acetyl-coenzyme A synthetase (651 aa).

CoA contacts are provided by residues arginine 190–lysine 193 and threonine 311. Residues glycine 387–proline 389, aspartate 411–threonine 416, aspartate 508, and arginine 523 contribute to the ATP site. Serine 531 contacts CoA. Arginine 534 lines the ATP pocket. Residues valine 545, histidine 547, and valine 550 each coordinate Mg(2+). An N6-acetyllysine modification is found at lysine 617.

This sequence belongs to the ATP-dependent AMP-binding enzyme family. Mg(2+) is required as a cofactor. In terms of processing, acetylated. Deacetylation by the SIR2-homolog deacetylase activates the enzyme.

It catalyses the reaction acetate + ATP + CoA = acetyl-CoA + AMP + diphosphate. In terms of biological role, catalyzes the conversion of acetate into acetyl-CoA (AcCoA), an essential intermediate at the junction of anabolic and catabolic pathways. AcsA undergoes a two-step reaction. In the first half reaction, AcsA combines acetate with ATP to form acetyl-adenylate (AcAMP) intermediate. In the second half reaction, it can then transfer the acetyl group from AcAMP to the sulfhydryl group of CoA, forming the product AcCoA. This is Acetyl-coenzyme A synthetase from Mycobacterium bovis (strain ATCC BAA-935 / AF2122/97).